The sequence spans 233 residues: uncharacterized protein (233 aa).

The protein belongs to the methyltransferase superfamily.

This is an uncharacterized protein from Bacillus subtilis (strain 168).